We begin with the raw amino-acid sequence, 259 residues long: DNA adenine methylase (259 aa).

S-adenosyl-L-methionine is bound by residues tyrosine 7, lysine 11, phenylalanine 32 to serine 37, aspartate 50, histidine 156 to phenylalanine 157, aspartate 171, and tyrosine 181.

The protein belongs to the N(4)/N(6)-methyltransferase family. In terms of assembly, monomer.

It catalyses the reaction a 2'-deoxyadenosine in DNA + S-adenosyl-L-methionine = an N(6)-methyl-2'-deoxyadenosine in DNA + S-adenosyl-L-homocysteine + H(+). Its function is as follows. An alpha subtype methylase, recognizes the double-stranded sequence 5'-GATC-3' and methylates A-2. Also acts on 5-hydroxymethylcytosine (hmC)-containing DNA, the normal base in this virus. May prevent degradation of viral DNA by the host restriction-modification antiviral defense system. This Enterobacteria phage T4 (Bacteriophage T4) protein is DNA adenine methylase.